Reading from the N-terminus, the 309-residue chain is tRNA N6-adenosine threonylcarbamoyltransferase (309 aa).

Fe cation is bound by residues His-108 and His-112. Residues 130 to 134 (LVSGG), Asp-163, Gly-176, Asp-180, and Asn-269 contribute to the substrate site. Asp-293 is a binding site for Fe cation.

This sequence belongs to the KAE1 / TsaD family. The cofactor is Fe(2+).

Its subcellular location is the cytoplasm. It catalyses the reaction L-threonylcarbamoyladenylate + adenosine(37) in tRNA = N(6)-L-threonylcarbamoyladenosine(37) in tRNA + AMP + H(+). In terms of biological role, required for the formation of a threonylcarbamoyl group on adenosine at position 37 (t(6)A37) in tRNAs that read codons beginning with adenine. Is involved in the transfer of the threonylcarbamoyl moiety of threonylcarbamoyl-AMP (TC-AMP) to the N6 group of A37, together with TsaE and TsaB. TsaD likely plays a direct catalytic role in this reaction. The chain is tRNA N6-adenosine threonylcarbamoyltransferase from Mycoplasmopsis agalactiae (strain NCTC 10123 / CIP 59.7 / PG2) (Mycoplasma agalactiae).